Consider the following 438-residue polypeptide: Trigger factor (438 aa).

Residues 163–248 (GDTAIIDFAG…VKEIKRKEIA (86 aa)) enclose the PPIase FKBP-type domain.

Belongs to the FKBP-type PPIase family. Tig subfamily.

It localises to the cytoplasm. It catalyses the reaction [protein]-peptidylproline (omega=180) = [protein]-peptidylproline (omega=0). Its function is as follows. Involved in protein export. Acts as a chaperone by maintaining the newly synthesized protein in an open conformation. Functions as a peptidyl-prolyl cis-trans isomerase. The chain is Trigger factor from Pelotomaculum thermopropionicum (strain DSM 13744 / JCM 10971 / SI).